The chain runs to 508 residues: UDP-N-acetylmuramoylalanine--D-glutamate ligase (508 aa).

138 to 144 (GTNGKTT) is an ATP binding site. A disordered region spans residues 294–314 (FDEPAPRRKKDAPPPTRAGGR).

This sequence belongs to the MurCDEF family.

Its subcellular location is the cytoplasm. It catalyses the reaction UDP-N-acetyl-alpha-D-muramoyl-L-alanine + D-glutamate + ATP = UDP-N-acetyl-alpha-D-muramoyl-L-alanyl-D-glutamate + ADP + phosphate + H(+). Its pathway is cell wall biogenesis; peptidoglycan biosynthesis. Cell wall formation. Catalyzes the addition of glutamate to the nucleotide precursor UDP-N-acetylmuramoyl-L-alanine (UMA). The chain is UDP-N-acetylmuramoylalanine--D-glutamate ligase from Bordetella parapertussis (strain 12822 / ATCC BAA-587 / NCTC 13253).